The sequence spans 1325 residues: uncharacterized protein (1325 aa).

The N-terminal stretch at 1–27 (MHTFTRKVKWPFMFTAIGLTFGIVAVA) is a signal peptide. Cys28 is lipidated: N-palmitoyl cysteine. Cys28 carries the S-diacylglycerol cysteine lipid modification. Disordered regions lie at residues 379 to 402 (RAASSSSEGTIQLKTASDGGGTTQ) and 430 to 464 (NTNANQTGGGGSGGGGGTSTGSSTGSSTETTTGNS). Residues 436 to 448 (TGGGGSGGGGGTS) are compositionally biased toward gly residues. Low complexity predominate over residues 449–464 (TGSSTGSSTETTTGNS).

This sequence belongs to the MG307/MG309/MG338 family.

Its subcellular location is the cell membrane. This is an uncharacterized protein from Mycoplasma pneumoniae (strain ATCC 29342 / M129 / Subtype 1) (Mycoplasmoides pneumoniae).